Reading from the N-terminus, the 339-residue chain is Phenylalanine--tRNA ligase alpha subunit (339 aa).

Glu253 is a binding site for Mg(2+).

It belongs to the class-II aminoacyl-tRNA synthetase family. Phe-tRNA synthetase alpha subunit type 1 subfamily. Tetramer of two alpha and two beta subunits. Mg(2+) is required as a cofactor.

It is found in the cytoplasm. It carries out the reaction tRNA(Phe) + L-phenylalanine + ATP = L-phenylalanyl-tRNA(Phe) + AMP + diphosphate + H(+). This Geobacter sulfurreducens (strain ATCC 51573 / DSM 12127 / PCA) protein is Phenylalanine--tRNA ligase alpha subunit.